Here is a 150-residue protein sequence, read N- to C-terminus: General odorant-binding protein 19d (150 aa).

An N-terminal signal peptide occupies residues 1 to 23 (MSHLVHLTVLLLVGILCLGATSA). Cystine bridges form between Cys-41-Cys-72, Cys-68-Cys-126, and Cys-116-Cys-135.

Belongs to the PBP/GOBP family. As to expression, expressed in the antenna, mostly on the anterior surface of the third antennal segment. Also detected in the maxillary palps and in cells at the bases of the taste hairs on the proboscis and internal taste organs of the head.

The protein resides in the secreted. The protein is General odorant-binding protein 19d (Obp19d) of Drosophila melanogaster (Fruit fly).